We begin with the raw amino-acid sequence, 121 residues long: Conopressin-conophysin (121 aa).

The first 20 residues, Met1–Ala20, serve as a signal peptide directing secretion. An intrachain disulfide couples Cys21 to Cys26. A 4-hydroxyproline; partial; in Conopressin-ba1c modification is found at Pro27. At Gly29 the chain carries Glycine amide. 7 disulfide bridges follow: Cys43/Cys83, Cys46/Cys57, Cys51/Cys73, Cys58/Cys63, Cys90/Cys108, Cys102/Cys120, and Cys109/Cys114.

It belongs to the vasopressin/oxytocin family. In terms of tissue distribution, expressed by the venom duct.

It localises to the secreted. This Conus bayani (Bayan's cone) protein is Conopressin-conophysin.